The sequence spans 150 residues: Large ribosomal subunit protein uL15 (150 aa).

A compositionally biased stretch (polar residues) spans Met1 to Asn15. The interval Met1–Gly53 is disordered. Residues Gly23–Ala32 show a composition bias toward gly residues.

It belongs to the universal ribosomal protein uL15 family. As to quaternary structure, part of the 50S ribosomal subunit.

Binds to the 23S rRNA. This Flavobacterium johnsoniae (strain ATCC 17061 / DSM 2064 / JCM 8514 / BCRC 14874 / CCUG 350202 / NBRC 14942 / NCIMB 11054 / UW101) (Cytophaga johnsonae) protein is Large ribosomal subunit protein uL15.